Here is a 222-residue protein sequence, read N- to C-terminus: Eukaryotic translation initiation factor 3 subunit K (222 aa).

Residues 46–208 form the PCI domain; the sequence is YDLEANLAVL…KIKTKNITEK (163 aa).

This sequence belongs to the eIF-3 subunit K family. Component of the eukaryotic translation initiation factor 3 (eIF-3) complex. The eIF-3 complex interacts with pix.

The protein localises to the cytoplasm. Its function is as follows. Component of the eukaryotic translation initiation factor 3 (eIF-3) complex, which is involved in protein synthesis of a specialized repertoire of mRNAs and, together with other initiation factors, stimulates binding of mRNA and methionyl-tRNAi to the 40S ribosome. The eIF-3 complex specifically targets and initiates translation of a subset of mRNAs involved in cell proliferation. The polypeptide is Eukaryotic translation initiation factor 3 subunit K (Drosophila sechellia (Fruit fly)).